Here is a 751-residue protein sequence, read N- to C-terminus: Disintegrin and metalloproteinase domain-containing protein 2 (751 aa).

The signal sequence occupies residues 1–16 (MLRVLFLLCGLSGLRT). A propeptide spanning residues 17-173 (KENSERLHVQ…PYKVQSVQPR (157 aa)) is cleaved from the precursor. Residues 17–702 (KENSERLHVQ…DVYQTAKPTR (686 aa)) lie on the Extracellular side of the membrane. Residues N122, N147, N219, and N289 are each glycosylated (N-linked (GlcNAc...) asparagine). Positions 177–374 (QYIEMHVVVE…QKSQCLQNLP (198 aa)) constitute a Peptidase M12B domain. 3 disulfides stabilise this stretch: C286/C369, C328/C353, and C330/C335. N-linked (GlcNAc...) asparagine glycans are attached at residues N352, N434, N458, N559, and N566. The 90-residue stretch at 383 to 472 (DAVCGNSIVE…LCPDDIVIQN (90 aa)) folds into the Disintegrin domain. A disulfide bridge connects residues C444 and C464. Residues 612–645 (VNLGCTLQNCNNQGICNSLQHCHCNPTFLPPNCS) form the EGF-like domain. Intrachain disulfides connect C616–C627, C621–C633, and C635–C644. N-linked (GlcNAc...) asparagine glycosylation is present at N643. Residues 703–723 (WPFFLLIPFFIILGALIAILV) form a helical membrane-spanning segment. Over 724–751 (KVQFQRKKWKTEDYTSDEQFESDSELKE) the chain is Cytoplasmic. S745 is subject to Phosphoserine.

As to quaternary structure, heterodimer with ADAM1/fertilin subunit alpha. Post-translationally, the signal and the metalloprotease domain are cleaved during the epididymal maturation of the spermatozoa. In terms of tissue distribution, expressed specifically in testis.

It localises to the membrane. Sperm surface membrane protein that may be involved in sperm-egg plasma membrane adhesion and fusion during fertilization. Could have a direct role in sperm-zona binding or migration of sperm from the uterus into the oviduct. Interactions with egg membrane could be mediated via binding between its disintegrin-like domain to one or more integrins receptors on the egg. This is a non catalytic metalloprotease-like protein. The polypeptide is Disintegrin and metalloproteinase domain-containing protein 2 (ADAM2) (Oryctolagus cuniculus (Rabbit)).